Reading from the N-terminus, the 322-residue chain is Replication factor C small subunit (322 aa).

46–53 serves as a coordination point for ATP; the sequence is GSAGIGKT.

It belongs to the activator 1 small subunits family. RfcS subfamily. In terms of assembly, heteromultimer composed of small subunits (RfcS) and large subunits (RfcL).

Part of the RFC clamp loader complex which loads the PCNA sliding clamp onto DNA. The polypeptide is Replication factor C small subunit (Methanoculleus marisnigri (strain ATCC 35101 / DSM 1498 / JR1)).